The primary structure comprises 183 residues: TATA-box-binding protein 2 (183 aa).

Tandem repeats lie at residues 8–84 (IENV…AKKL) and 99–177 (VQNI…RQQL).

This sequence belongs to the TBP family.

General factor that plays a role in the activation of archaeal genes transcribed by RNA polymerase. Binds specifically to the TATA box promoter element which lies close to the position of transcription initiation. This Methanosarcina mazei (strain ATCC BAA-159 / DSM 3647 / Goe1 / Go1 / JCM 11833 / OCM 88) (Methanosarcina frisia) protein is TATA-box-binding protein 2.